The sequence spans 339 residues: MDHEADAFRDLMTITRFVLNEQSKYPESRGDFTILLSNIVLGCKFVCSAVNKAGLAKLIGLAGDTNIQGEEQKKLDVLSNDVFVKALVSSGRTSVLVSEEDEEATFVESSKCGKYCVVFDPLDGSSNIDCGVSIGTIFGIYTMEHSDEPTTKDVLKPGNEMVAAGYCMYGSSCMLVLSTGTGVHGFTLDPSLGEFILTHPDIKIPKKGNIYSVNEGNAQNWDGPTTKYVERCKYPKDGSPAKSLRYVGSMVADVHRTLLYGGIFLYPADKKSPNGKLRVLYEVFPMAFLMEQAGGQAFTGKKRALDLVPKKIHERSPIFLGSYDDVEEIKALYAEEEKN.

5 residues coordinate Mg(2+): Glu-70, Glu-99, Asp-120, Leu-122, and Asp-123. Substrate is bound by residues 123 to 126 (DGSS), Asn-214, Tyr-246, Tyr-266, and Lys-276. Glu-282 contributes to the Mg(2+) binding site.

The protein belongs to the FBPase class 1 family. Mg(2+) serves as cofactor.

It is found in the cytoplasm. The catalysed reaction is beta-D-fructose 1,6-bisphosphate + H2O = beta-D-fructose 6-phosphate + phosphate. The polypeptide is Fructose-1,6-bisphosphatase, cytosolic (Brassica napus (Rape)).